The following is a 440-amino-acid chain: uncharacterized protein (440 aa).

This is an uncharacterized protein from Saccharolobus islandicus (Sulfolobus islandicus).